The primary structure comprises 507 residues: ATP synthase subunit alpha, chloroplastic (507 aa).

Residue 170–177 (GDRQTGKT) participates in ATP binding. Phosphothreonine is present on T257.

It belongs to the ATPase alpha/beta chains family. As to quaternary structure, F-type ATPases have 2 components, CF(1) - the catalytic core - and CF(0) - the membrane proton channel. CF(1) has five subunits: alpha(3), beta(3), gamma(1), delta(1), epsilon(1). CF(0) has four main subunits: a, b, b' and c.

Its subcellular location is the plastid. It localises to the chloroplast thylakoid membrane. It catalyses the reaction ATP + H2O + 4 H(+)(in) = ADP + phosphate + 5 H(+)(out). Its function is as follows. Produces ATP from ADP in the presence of a proton gradient across the membrane. The alpha chain is a regulatory subunit. The chain is ATP synthase subunit alpha, chloroplastic from Lobularia maritima (Sweet alyssum).